The following is a 172-amino-acid chain: ATP synthase subunit b (172 aa).

The chain crosses the membrane as a helical span at residues G13 to L33.

The protein belongs to the ATPase B chain family. F-type ATPases have 2 components, F(1) - the catalytic core - and F(0) - the membrane proton channel. F(1) has five subunits: alpha(3), beta(3), gamma(1), delta(1), epsilon(1). F(0) has three main subunits: a(1), b(2) and c(10-14). The alpha and beta chains form an alternating ring which encloses part of the gamma chain. F(1) is attached to F(0) by a central stalk formed by the gamma and epsilon chains, while a peripheral stalk is formed by the delta and b chains.

The protein resides in the cell membrane. In terms of biological role, f(1)F(0) ATP synthase produces ATP from ADP in the presence of a proton or sodium gradient. F-type ATPases consist of two structural domains, F(1) containing the extramembraneous catalytic core and F(0) containing the membrane proton channel, linked together by a central stalk and a peripheral stalk. During catalysis, ATP synthesis in the catalytic domain of F(1) is coupled via a rotary mechanism of the central stalk subunits to proton translocation. Its function is as follows. Component of the F(0) channel, it forms part of the peripheral stalk, linking F(1) to F(0). The protein is ATP synthase subunit b of Priestia megaterium (strain ATCC 12872 / QMB1551) (Bacillus megaterium).